The primary structure comprises 161 residues: Nucleotide-binding protein Bpro_1596 (161 aa).

This sequence belongs to the YajQ family.

Its function is as follows. Nucleotide-binding protein. This chain is Nucleotide-binding protein Bpro_1596, found in Polaromonas sp. (strain JS666 / ATCC BAA-500).